The sequence spans 64 residues: Large ribosomal subunit protein bL35c (64 aa).

It belongs to the bacterial ribosomal protein bL35 family.

The protein resides in the plastid. The protein localises to the chloroplast. The chain is Large ribosomal subunit protein bL35c from Trieres chinensis (Marine centric diatom).